A 1255-amino-acid polypeptide reads, in one-letter code: Period circadian protein homolog 2 (1255 aa).

The segment at 1 to 79 (MNGYAEFPPS…EPPDARQSPD (79 aa)) is disordered. A compositionally biased stretch (polar residues) spans 35 to 56 (SSGSSGHETNENCSTGRDSQGS). Positions 111 to 120 (LIKTLKELKV) match the Nuclear export signal 1 motif. In terms of domain architecture, PAS 1 spans 181–248 (VTSEHIVKNA…FHSFTSPYKL (68 aa)). The LXXLL motif lies at 308–312 (LCCLL). Residues 321-387 (YEAPRIPPEK…MLAIHKKILQ (67 aa)) form the PAS 2 domain. The PAC domain maps to 395-438 (YSPIRFRARNGEYITLDTSWSSFINPWSRKISFIIGRHKVRVGP). A Nuclear export signal 2 motif is present at residues 462 to 471 (LTEQIHRLLL). Disordered regions lie at residues 473–557 (PVPH…AVPA) and 617–646 (RSSD…SRTG). The important for protein stability stretch occupies residues 480–484 (SGYGS). Residues 504 to 516 (NGHEDSRRRRAEI) are compositionally biased toward basic and acidic residues. Positions 512–717 (RRAEICKNGN…ALACGLSQEK (206 aa)) are CSNK1E binding domain. A phosphoserine mark is found at S527, S530, S533, and S540. Over residues 529 to 541 (YSHESGEQKKKSV) the composition is skewed to basic and acidic residues. Residues S662, S696, S700, S714, S766, and S771 each carry the phosphoserine modification. Disordered stretches follow at residues 764–838 (ERSK…DTSQ) and 931–985 (FPSH…QSRS). A Nuclear localization signal motif is present at residues 789 to 805 (KKTGKNRKLKSKRVKPR). Positions 790 to 803 (KTGKNRKLKSKRVK) are enriched in basic residues. 2 stretches are compositionally biased toward polar residues: residues 829–838 (TAWSPSDTSQ) and 936–956 (TLTS…TSIP). An interaction with PPARG region spans residues 888–1071 (QFAVQPPPFP…NEDLCSASGS (184 aa)). S945 bears the Phosphoserine mark. Over residues 959 to 972 (PCACPATRATPPSA) the composition is skewed to low complexity. Position 977 is a phosphoserine (S977). Residues 989–996 (LQLNLLQL) carry the Nuclear export signal 3 motif. The tract at residues 1018–1050 (VGADCKPGTSRDQQPKAPLTRDEPSDTQNSDAL) is disordered. Residues 1057-1061 (LNLLL) carry the LXXLL motif. The tract at residues 1077–1106 (LGSGSLGCDASPSGAGSSDTSHTSKYFGSI) is disordered. Polar residues predominate over residues 1090–1106 (GAGSSDTSHTSKYFGSI). At S1124 the chain carries Phosphoserine. Positions 1155-1255 (SRNLEAVLKE…PLNHRIEEQT (101 aa)) are CRY binding domain. Residues 1231–1255 (GLSEVSDTKEDENGSPLNHRIEEQT) form a disordered region.

Homodimer. Component of the circadian core oscillator, which includes the CRY proteins, CLOCK or NPAS2, BMAL1 or BMAL2, CSNK1D and/or CSNK1E, TIMELESS, and the PER proteins. Interacts with CLOCK-BMAL1 (off DNA). Interacts with BMAL2. Interacts directly with PER1 and PER3, and through a C-terminal domain, with CRY1 and CRY2. Interacts (via PAS 2 domain) with TIMELESS. Interacts with NFIL3. Different large complexes have been identified with different repressive functions. The core of PER complexes is composed of at least PER1, PER2, PER3, CRY1, CRY2, CSNK1D and/or CSNK1E. The large PER complex involved in the repression of transcriptional termination is composed of at least PER2, CDK9, DDX5, DHX9, NCBP1 and POLR2A (active). The large PER complex involved in the histone deacetylation is composed of at least HDAC1, PER2, SFPQ and SIN3A. The large PER complex involved in the histone methylation is composed of at least PER2, CBX3, TRIM28, SUV39H1 and/or SUV39H2; CBX3 mediates the formation of the complex. Interacts with SETX; the interaction inhibits termination of circadian target genes. Interacts with the nuclear receptors HNF4A, NR1D1, NR4A2, RORA, PPARA, PPARG and THRA; the interaction with at least PPARG is ligand dependent. Interacts with PML. Interacts (phosphorylated) with BTRC and FBXW11; the interactions trigger proteasomal degradation. Interacts with NONO and SFPQ. Interacts with CAVIN3. Interacts with MAGEL2. Interacts with MAP1LC3B. Interacts with HNF4A. In terms of processing, acetylated. Deacetylated by SIRT1, resulting in decreased protein stability. Deacetylated by SIRT6, preventing its degradation by the proteasome, resulting in increased protein stability. Phosphorylated by CSNK1E and CSNK1D. Phosphorylation results in PER2 protein degradation. May be dephosphorylated by PP1. Post-translationally, ubiquitinated, leading to its proteasomal degradation. Ubiquitination may be inhibited by CRY1. As to expression, widely expressed. Found in heart, brain, placenta, lung, liver, skeleatal muscle, kidney and pancreas. High levels in skeletal muscle and pancreas. Low levels in lung. Isoform 2 is expressed in keratinocytes (at protein level).

It is found in the nucleus. The protein resides in the cytoplasm. The protein localises to the perinuclear region. Its subcellular location is the nucleolus. Its function is as follows. Transcriptional repressor which forms a core component of the circadian clock. The circadian clock, an internal time-keeping system, regulates various physiological processes through the generation of approximately 24 hour circadian rhythms in gene expression, which are translated into rhythms in metabolism and behavior. It is derived from the Latin roots 'circa' (about) and 'diem' (day) and acts as an important regulator of a wide array of physiological functions including metabolism, sleep, body temperature, blood pressure, endocrine, immune, cardiovascular, and renal function. Consists of two major components: the central clock, residing in the suprachiasmatic nucleus (SCN) of the brain, and the peripheral clocks that are present in nearly every tissue and organ system. Both the central and peripheral clocks can be reset by environmental cues, also known as Zeitgebers (German for 'timegivers'). The predominant Zeitgeber for the central clock is light, which is sensed by retina and signals directly to the SCN. The central clock entrains the peripheral clocks through neuronal and hormonal signals, body temperature and feeding-related cues, aligning all clocks with the external light/dark cycle. Circadian rhythms allow an organism to achieve temporal homeostasis with its environment at the molecular level by regulating gene expression to create a peak of protein expression once every 24 hours to control when a particular physiological process is most active with respect to the solar day. Transcription and translation of core clock components (CLOCK, NPAS2, BMAL1, BMAL2, PER1, PER2, PER3, CRY1 and CRY2) plays a critical role in rhythm generation, whereas delays imposed by post-translational modifications (PTMs) are important for determining the period (tau) of the rhythms (tau refers to the period of a rhythm and is the length, in time, of one complete cycle). A diurnal rhythm is synchronized with the day/night cycle, while the ultradian and infradian rhythms have a period shorter and longer than 24 hours, respectively. Disruptions in the circadian rhythms contribute to the pathology of cardiovascular diseases, cancer, metabolic syndrome and aging. A transcription/translation feedback loop (TTFL) forms the core of the molecular circadian clock mechanism. Transcription factors, CLOCK or NPAS2 and BMAL1 or BMAL2, form the positive limb of the feedback loop, act in the form of a heterodimer and activate the transcription of core clock genes and clock-controlled genes (involved in key metabolic processes), harboring E-box elements (5'-CACGTG-3') within their promoters. The core clock genes: PER1/2/3 and CRY1/2 which are transcriptional repressors form the negative limb of the feedback loop and interact with the CLOCK|NPAS2-BMAL1|BMAL2 heterodimer inhibiting its activity and thereby negatively regulating their own expression. This heterodimer also activates nuclear receptors NR1D1/2 and RORA/B/G, which form a second feedback loop and which activate and repress BMAL1 transcription, respectively. PER1 and PER2 proteins transport CRY1 and CRY2 into the nucleus with appropriate circadian timing, but also contribute directly to repression of clock-controlled target genes through interaction with several classes of RNA-binding proteins, helicases and others transcriptional repressors. PER appears to regulate circadian control of transcription by at least three different modes. First, interacts directly with the CLOCK-BMAL1 at the tail end of the nascent transcript peak to recruit complexes containing the SIN3-HDAC that remodel chromatin to repress transcription. Second, brings H3K9 methyltransferases such as SUV39H1 and SUV39H2 to the E-box elements of the circadian target genes, like PER2 itself or PER1. The recruitment of each repressive modifier to the DNA seems to be very precisely temporally orchestrated by the large PER complex, the deacetylases acting before than the methyltransferases. Additionally, large PER complexes are also recruited to the target genes 3' termination site through interactions with RNA-binding proteins and helicases that may play a role in transcription termination to regulate transcription independently of CLOCK-BMAL1 interactions. Recruitment of large PER complexes to the elongating polymerase at PER and CRY termination sites inhibited SETX action, impeding RNA polymerase II release and thereby repressing transcriptional reinitiation. May propagate clock information to metabolic pathways via the interaction with nuclear receptors. Coactivator of PPARA and corepressor of NR1D1, binds rhythmically at the promoter of nuclear receptors target genes like BMAL1 or G6PC1. Directly and specifically represses PPARG proadipogenic activity by blocking PPARG recruitment to target promoters and thereby inhibiting transcriptional activation. Required for fatty acid and lipid metabolism, is involved as well in the regulation of circulating insulin levels. Plays an important role in the maintenance of cardiovascular functions through the regulation of NO and vasodilatatory prostaglandins production in aortas. Controls circadian glutamate uptake in synaptic vesicles through the regulation of VGLUT1 expression. May also be involved in the regulation of inflammatory processes. Represses the CLOCK-BMAL1 induced transcription of BHLHE40/DEC1 and ATF4. Negatively regulates the formation of the TIMELESS-CRY1 complex by competing with TIMELESS for binding to CRY1. This Homo sapiens (Human) protein is Period circadian protein homolog 2 (PER2).